Consider the following 357-residue polypeptide: Retinoic acid-induced protein 3 (357 aa).

Residues 1–33 (MATTVPDGCRNGLKSKYYRLCDKAEAWGIVLET) lie on the Extracellular side of the membrane. Residues 34-54 (VATAGVVTSVAFMLTLPILVC) form a helical membrane-spanning segment. The Cytoplasmic portion of the chain corresponds to 55–68 (KVQDSNRRKMLPTQ). Residues 69-89 (FLFLLGVLGIFGLTFAFIIGL) form a helical membrane-spanning segment. The Extracellular portion of the chain corresponds to 90 to 97 (DGSTGPTR). Residues 98-118 (FFLFGILFSICFSCLLAHAVS) traverse the membrane as a helical segment. Over 119–129 (LTKLVRGRKPL) the chain is Cytoplasmic. The helical transmembrane segment at 130–150 (SLLVILGLAVGFSLVQDVIAI) threads the bilayer. The Extracellular portion of the chain corresponds to 151-176 (EYIVLTMNRTNVNVFSELSAPRRNED). An N-linked (GlcNAc...) asparagine glycan is attached at Asn158. The chain crosses the membrane as a helical span at residues 177–197 (FVLLLTYVLFLMALTFLMSSF). Topologically, residues 198–212 (TFCGSFTGWKRHGAH) are cytoplasmic. Residues 213 to 233 (IYLTMLLSIAIWVAWITLLML) traverse the membrane as a helical segment. At 234–247 (PDFDRRWDDTILSS) the chain is on the extracellular side. The chain crosses the membrane as a helical span at residues 248 to 268 (ALAANGWVFLLAYVSPEFWLL). At 269–357 (TKQRNPMDYP…KDYEVKKEGS (89 aa)) the chain is on the cytoplasmic side. Residue Ser301 is modified to Phosphoserine. Phosphotyrosine is present on residues Tyr317 and Tyr320. Ser345 carries the post-translational modification Phosphoserine. 2 positions are modified to phosphotyrosine: Tyr347 and Tyr350.

Belongs to the G-protein coupled receptor 3 family. As to quaternary structure, interacts (via its transmembrane domain) with EGFR. In terms of processing, phosphorylated in two conserved double-tyrosine motifs, Tyr-317/Tyr-320 and Tyr-347/Tyr-350, by EGFR; leading to inactivation of the tumor suppressive function of GPRC5A in lung cancer cells. Tyr-317 and Tyr-320 are the preferred residues responsible for EGFR-mediated GPRC5A phosphorylation. As to expression, expressed at high level in fetal and adult lung tissues but repressed in most human lung cancers. Constitutively expressed in fetal kidney and adult placenta, kidney, prostate, testis, ovary, small intestine, colon, stomach, and spinal cord at low to moderate levels. Not detectable in fetal heart, brain, and liver and adult heart, brain, liver, skeletal muscle, pancreas, spleen, thymus, and peripheral leukocytes. According to PubMed:10783259, expressed at low but detectable level in pancreas and heart.

Its subcellular location is the cell membrane. The protein localises to the cytoplasmic vesicle membrane. Functionally, orphan receptor. Could be involved in modulating differentiation and maintaining homeostasis of epithelial cells. This retinoic acid-inducible GPCR provide evidence for a possible interaction between retinoid and G-protein signaling pathways. Functions as a negative modulator of EGFR signaling. May act as a lung tumor suppressor. This chain is Retinoic acid-induced protein 3 (GPRC5A), found in Homo sapiens (Human).